The following is a 200-amino-acid chain: Pyridoxal 5'-phosphate synthase subunit PdxT (200 aa).

52–54 contributes to the L-glutamine binding site; it reads GES. Residue Cys-84 is the Nucleophile of the active site. Residues Arg-116 and 145–146 each bind L-glutamine; that span reads IR. Active-site charge relay system residues include His-181 and Glu-183.

It belongs to the glutaminase PdxT/SNO family. As to quaternary structure, in the presence of PdxS, forms a dodecamer of heterodimers. Only shows activity in the heterodimer.

The enzyme catalyses aldehydo-D-ribose 5-phosphate + D-glyceraldehyde 3-phosphate + L-glutamine = pyridoxal 5'-phosphate + L-glutamate + phosphate + 3 H2O + H(+). It carries out the reaction L-glutamine + H2O = L-glutamate + NH4(+). The protein operates within cofactor biosynthesis; pyridoxal 5'-phosphate biosynthesis. Functionally, catalyzes the hydrolysis of glutamine to glutamate and ammonia as part of the biosynthesis of pyridoxal 5'-phosphate. The resulting ammonia molecule is channeled to the active site of PdxS. This is Pyridoxal 5'-phosphate synthase subunit PdxT from Saccharolobus islandicus (strain L.S.2.15 / Lassen #1) (Sulfolobus islandicus).